Consider the following 888-residue polypeptide: Alanine--tRNA ligase (888 aa).

The Zn(2+) site is built by His573, His577, Cys676, and His680.

This sequence belongs to the class-II aminoacyl-tRNA synthetase family. It depends on Zn(2+) as a cofactor.

The protein localises to the cytoplasm. The enzyme catalyses tRNA(Ala) + L-alanine + ATP = L-alanyl-tRNA(Ala) + AMP + diphosphate. Catalyzes the attachment of alanine to tRNA(Ala) in a two-step reaction: alanine is first activated by ATP to form Ala-AMP and then transferred to the acceptor end of tRNA(Ala). Also edits incorrectly charged Ser-tRNA(Ala) and Gly-tRNA(Ala) via its editing domain. In Corynebacterium glutamicum (strain ATCC 13032 / DSM 20300 / JCM 1318 / BCRC 11384 / CCUG 27702 / LMG 3730 / NBRC 12168 / NCIMB 10025 / NRRL B-2784 / 534), this protein is Alanine--tRNA ligase.